Reading from the N-terminus, the 574-residue chain is Phosphatidylinositol 4-kinase gamma 3 (574 aa).

Ubiquitin-like domains follow at residues 32–109 (PILV…SDLQ) and 110–188 (AISV…AKVR). A PI3K/PI4K catalytic domain is found at 257-555 (GNGPIRSSDG…IVPTETTEDE (299 aa)). The segment at 263–269 (SSDGSGG) is G-loop. ATP is bound by residues 264–270 (SDGSGGA), Lys-286, and 381–384 (QMFV). Residues 414 to 422 (ANADRHAGN) form a catalytic loop region. The activation loop stretch occupies residues 438-464 (PIDHGYCFPNKFEDCTFEWLYWPQAKE). An ATP-binding site is contributed by Asp-440.

This sequence belongs to the PI3/PI4-kinase family. Type II PI4K subfamily.

It catalyses the reaction a 1,2-diacyl-sn-glycero-3-phospho-(1D-myo-inositol) + ATP = a 1,2-diacyl-sn-glycero-3-phospho-(1D-myo-inositol 4-phosphate) + ADP + H(+). In terms of biological role, the phosphorylation of phosphatidylinositol (PI) to PI4P is the first committed step in the generation of phosphatidylinositol 4,5-bisphosphate (PIP2), a precursor of the second messenger inositol 1,4,5-trisphosphate (InsP3). The protein is Phosphatidylinositol 4-kinase gamma 3 (PI4KG3) of Arabidopsis thaliana (Mouse-ear cress).